Consider the following 280-residue polypeptide: MDDQRDLISNHEQLPILGQRARAPESNCNRGVLYTSVSVLVALLLAGQATTAYFLYQQQGRLDKLTVTSQNLQLENLRMKLPKSAKPVSPMRMATPLLMRPLSMDNMLQAPVKNVTKYGNMTQDHVMHLLTKSGPVNYPQLKGSFPENLKHLKNSMNGLDWKVFESWMKQWLLFEMSKNSLEEKQPTQTPPKVLTKCQEEVSHIPDVHPGAFRPKCDENGNYMPLQCHGSTGYCWCVFPNGTEVPHTKSRGRHNCSEPLDMEDPSSGLGVTKQDMGQMFL.

Residues 1–30 (MDDQRDLISNHEQLPILGQRARAPESNCNR) are Cytoplasmic-facing. Ser-9 carries the post-translational modification Phosphoserine. The helical; Signal-anchor for type II membrane protein transmembrane segment at 31 to 56 (GVLYTSVSVLVALLLAGQATTAYFLY) threads the bilayer. The Extracellular segment spans residues 57-280 (QQQGRLDKLT…TKQDMGQMFL (224 aa)). N-linked (GlcNAc...) asparagine glycans are attached at residues Asn-114 and Asn-120. Residues 194–255 (LTKCQEEVSH…HTKSRGRHNC (62 aa)) enclose the Thyroglobulin type-1 domain. 3 disulfides stabilise this stretch: Cys-197–Cys-216, Cys-227–Cys-234, and Cys-236–Cys-255. The disordered stretch occupies residues 246–268 (HTKSRGRHNCSEPLDMEDPSSGL). The O-linked (Xyl...) (chondroitin sulfate) serine glycan is linked to Ser-266.

As to quaternary structure, nonamer composed of three alpha/beta/gamma heterotrimers. Interacts with CD44; this complex is essential for the MIF-induced signaling cascade that results in B cell survival. Interacts with the mature form of CTSL; the complex survive in neutral pH environment.

Its subcellular location is the late endosome. It is found in the lysosome. The protein localises to the cell membrane. The protein resides in the endoplasmic reticulum membrane. It localises to the golgi apparatus. Its subcellular location is the trans-Golgi network. It is found in the endosome. The protein localises to the secreted. Its function is as follows. Plays a critical role in MHC class II antigen processing by stabilizing peptide-free class II alpha/beta heterodimers in a complex soon after their synthesis and directing transport of the complex from the endoplasmic reticulum to compartments where peptide loading of class II takes place. Enhance also the stimulation of T-cell responses through interaction with CD44. In terms of biological role, binds to the peptide-binding site of MHC class II alpha/beta heterodimers forming an alpha-beta-CLIP complex, thereby preventing the loading of antigenic peptides to the MHC class II complex until its release by HLA-DM in the endosome. Stabilizes the conformation of mature CTSL by binding to its active site and serving as a chaperone to help maintain a pool of mature enzyme in endocytic compartments and extracellular space of antigen-presenting cells (APCs). This is H-2 class II histocompatibility antigen gamma chain from Rattus norvegicus (Rat).